The primary structure comprises 444 residues: MPSIVLPPKPTALQKPHINLAVVGHVDNGKSTLVGRLLYETGYVDEKAFKEIEEMAKKMGKEDFAFAWILDRFKEERERGVTIEATHVGFETQKLFITIIDLPGHRDFVKNMIVGASQADAALFVISARPGEFETAIGPQGQGREHLFLIRTLGIQQLVVAVNKMDAVNYDQKRYEQVKAEVSKLLKLLGYDPSKIHFVPVSAIKGDNVRTKSPNTPWYQGPTLLEVLDTFQPPPRPTDKPLRMPIQDVFSITGAGTVVVGRVETGVLKVGDKVVIVPPAKVGDVRSIETHHMKLEQAQPGDNVGVNVRGINKEDVKRGDVLGKVDNIPTVAEEIVARIVVLWHPTAIGPGYAPVMHIHTATVPVQIVELVSKLDPRTGQAVEQKPQFIKQGDVAIVKIKPLKPVVAEKFSDFPPLGRFALRDMGRTIAAGQILEVKPAQVQIK.

In terms of domain architecture, tr-type G spans 15–236 (KPHINLAVVG…VLDTFQPPPR (222 aa)). Residues 24–31 (GHVDNGKS) are G1. Residue 24–31 (GHVDNGKS) coordinates GTP. Residue Ser-31 coordinates Mg(2+). The segment at 80 to 84 (GVTIE) is G2. The segment at 101 to 104 (DLPG) is G3. Residues 101–105 (DLPGH) and 163–166 (NKMD) contribute to the GTP site. Residues 163–166 (NKMD) form a G4 region. The tract at residues 202–204 (SAI) is G5.

Belongs to the TRAFAC class translation factor GTPase superfamily. Classic translation factor GTPase family. EF-Tu/EF-1A subfamily.

Its subcellular location is the cytoplasm. It carries out the reaction GTP + H2O = GDP + phosphate + H(+). Functionally, GTP hydrolase that promotes the GTP-dependent binding of aminoacyl-tRNA to the A-site of ribosomes during protein biosynthesis. This chain is Elongation factor 1-alpha, found in Pyrobaculum calidifontis (strain DSM 21063 / JCM 11548 / VA1).